Reading from the N-terminus, the 63-residue chain is Large ribosomal subunit protein uL30 (63 aa).

It belongs to the universal ribosomal protein uL30 family. As to quaternary structure, part of the 50S ribosomal subunit.

The chain is Large ribosomal subunit protein uL30 from Xylella fastidiosa (strain 9a5c).